A 704-amino-acid chain; its full sequence is Myb-related protein B (704 aa).

3 HTH myb-type domains span residues 26 to 77 (RDNR…LRVL), 78 to 133 (NPDL…NPEV), and 134 to 184 (KKSC…KRKV). A DNA-binding region (H-T-H motif) is located at residues 54-77 (WKFLASHFPNRTDQQCQYRWLRVL). Lys-104 is covalently cross-linked (Glycyl lysine isopeptide (Lys-Gly) (interchain with G-Cter in SUMO2)). 2 DNA-binding regions (H-T-H motif) span residues 106-129 (WTLIAKHLKGRLGKQCRERWHNHL) and 157-180 (WAEIAKMLPGRTDNAVKNHWNSTI). Lys-197 is covalently cross-linked (Glycyl lysine isopeptide (Lys-Gly) (interchain with G-Cter in SUMO2)). Phosphothreonine is present on Thr-267. A Glycyl lysine isopeptide (Lys-Gly) (interchain with G-Cter in SUMO2) cross-link involves residue Lys-275. The residue at position 282 (Ser-282) is a Phosphoserine. Positions 325 to 412 (LSKFDLPEEP…GSGIGTPPSV (88 aa)) are disordered. Over residues 339–366 (SVVSSPVQPQTSQQQQEEALQSSQQAAT) the composition is skewed to low complexity. Ser-396 is modified (phosphoserine). Lys-414 is covalently cross-linked (Glycyl lysine isopeptide (Lys-Gly) (interchain with G-Cter in SUMO2)). Residues Thr-443 and Thr-447 each carry the phosphothreonine; by CDK2 modification. Residues Lys-450 and Lys-485 each participate in a glycyl lysine isopeptide (Lys-Gly) (interchain with G-Cter in SUMO2) cross-link. Residues Thr-490 and Thr-497 each carry the phosphothreonine; by CDK2 modification. Residues Lys-502 and Lys-513 each participate in a glycyl lysine isopeptide (Lys-Gly) (interchain with G-Cter in SUMO2) cross-link. Position 524 is a phosphothreonine; by CDK2 (Thr-524). Residues Lys-527, Lys-537, and Lys-550 each participate in a glycyl lysine isopeptide (Lys-Gly) (interchain with G-Cter in SUMO2) cross-link. At Ser-581 the chain carries Phosphoserine; by CDK2. Residues Lys-588 and Lys-600 each participate in a glycyl lysine isopeptide (Lys-Gly) (interchain with G-Cter in SUMO2) cross-link. A disordered region spans residues 603 to 626 (SSTMPKPLSLPTSVTPSSCGFTSP). The span at 607-620 (PKPLSLPTSVTPSS) shows a compositional bias: low complexity. Residues Lys-629, Lys-643, and Lys-652 each participate in a glycyl lysine isopeptide (Lys-Gly) (interchain with G-Cter in SUMO2) cross-link.

As to quaternary structure, component of the DREAM complex (also named LINC complex) at least composed of E2F4, E2F5, LIN9, LIN37, LIN52, LIN54, MYBL1, MYBL2, RBL1, RBL2, RBBP4, TFDP1 and TFDP2. The complex exists in quiescent cells where it represses cell cycle-dependent genes. It dissociates in S phase when LIN9, LIN37, LIN52 and LIN54 form a subcomplex that binds to MYBL2. Interacts with CCNF (via the Cyclin N-terminal domain). Phosphorylated by cyclin A/CDK2 during S-phase. Phosphorylation at Thr-524 is probably involved in transcriptional activity.

The protein resides in the nucleus. Its function is as follows. Transcription factor involved in the regulation of cell survival, proliferation, and differentiation. Transactivates the expression of the CLU gene. This Mus musculus (Mouse) protein is Myb-related protein B (Mybl2).